Here is a 508-residue protein sequence, read N- to C-terminus: Light-independent protochlorophyllide reductase subunit B (508 aa).

Aspartate 36 lines the [4Fe-4S] cluster pocket. The active-site Proton donor is aspartate 294. 429–430 (GM) lines the substrate pocket.

This sequence belongs to the ChlB/BchB/BchZ family. In terms of assembly, protochlorophyllide reductase is composed of three subunits; ChlL, ChlN and ChlB. Forms a heterotetramer of two ChlB and two ChlN subunits. [4Fe-4S] cluster serves as cofactor.

It catalyses the reaction chlorophyllide a + oxidized 2[4Fe-4S]-[ferredoxin] + 2 ADP + 2 phosphate = protochlorophyllide a + reduced 2[4Fe-4S]-[ferredoxin] + 2 ATP + 2 H2O. It participates in porphyrin-containing compound metabolism; chlorophyll biosynthesis (light-independent). Functionally, component of the dark-operative protochlorophyllide reductase (DPOR) that uses Mg-ATP and reduced ferredoxin to reduce ring D of protochlorophyllide (Pchlide) to form chlorophyllide a (Chlide). This reaction is light-independent. The NB-protein (ChlN-ChlB) is the catalytic component of the complex. This Synechococcus elongatus (strain ATCC 33912 / PCC 7942 / FACHB-805) (Anacystis nidulans R2) protein is Light-independent protochlorophyllide reductase subunit B.